A 129-amino-acid chain; its full sequence is Aspartate 1-decarboxylase (129 aa).

The Schiff-base intermediate with substrate; via pyruvic acid role is filled by Ser-25. Ser-25 bears the Pyruvic acid (Ser) mark. Position 57 (Thr-57) interacts with substrate. Tyr-58 functions as the Proton donor in the catalytic mechanism. A substrate-binding site is contributed by 73-75 (GAA).

Belongs to the PanD family. As to quaternary structure, heterooctamer of four alpha and four beta subunits. Pyruvate is required as a cofactor. In terms of processing, is synthesized initially as an inactive proenzyme, which is activated by self-cleavage at a specific serine bond to produce a beta-subunit with a hydroxyl group at its C-terminus and an alpha-subunit with a pyruvoyl group at its N-terminus.

The protein resides in the cytoplasm. It catalyses the reaction L-aspartate + H(+) = beta-alanine + CO2. Its pathway is cofactor biosynthesis; (R)-pantothenate biosynthesis; beta-alanine from L-aspartate: step 1/1. Functionally, catalyzes the pyruvoyl-dependent decarboxylation of aspartate to produce beta-alanine. In Prosthecochloris aestuarii (strain DSM 271 / SK 413), this protein is Aspartate 1-decarboxylase.